Consider the following 388-residue polypeptide: Succinate--CoA ligase [ADP-forming] subunit beta (388 aa).

Residues 9 to 244 (KALFAEYGLP…PSQDDAREAH (236 aa)) enclose the ATP-grasp domain. ATP-binding positions include Lys46, 53–55 (GRG), Glu99, Thr102, and Glu107. Mg(2+) contacts are provided by Asn199 and Asp213. Substrate is bound by residues Asn264 and 321–323 (GIV).

Belongs to the succinate/malate CoA ligase beta subunit family. Heterotetramer of two alpha and two beta subunits. It depends on Mg(2+) as a cofactor.

It carries out the reaction succinate + ATP + CoA = succinyl-CoA + ADP + phosphate. The catalysed reaction is GTP + succinate + CoA = succinyl-CoA + GDP + phosphate. The protein operates within carbohydrate metabolism; tricarboxylic acid cycle; succinate from succinyl-CoA (ligase route): step 1/1. Succinyl-CoA synthetase functions in the citric acid cycle (TCA), coupling the hydrolysis of succinyl-CoA to the synthesis of either ATP or GTP and thus represents the only step of substrate-level phosphorylation in the TCA. The beta subunit provides nucleotide specificity of the enzyme and binds the substrate succinate, while the binding sites for coenzyme A and phosphate are found in the alpha subunit. The chain is Succinate--CoA ligase [ADP-forming] subunit beta from Shewanella pealeana (strain ATCC 700345 / ANG-SQ1).